A 297-amino-acid chain; its full sequence is Homoserine kinase (297 aa).

82 to 92 (PLTRGLGSSAS) is an ATP binding site.

This sequence belongs to the GHMP kinase family. Homoserine kinase subfamily.

Its subcellular location is the cytoplasm. It carries out the reaction L-homoserine + ATP = O-phospho-L-homoserine + ADP + H(+). The protein operates within amino-acid biosynthesis; L-threonine biosynthesis; L-threonine from L-aspartate: step 4/5. In terms of biological role, catalyzes the ATP-dependent phosphorylation of L-homoserine to L-homoserine phosphate. This is Homoserine kinase from Bacillus cereus (strain G9842).